The following is a 156-amino-acid chain: SsrA-binding protein (156 aa).

The protein belongs to the SmpB family.

The protein localises to the cytoplasm. Its function is as follows. Required for rescue of stalled ribosomes mediated by trans-translation. Binds to transfer-messenger RNA (tmRNA), required for stable association of tmRNA with ribosomes. tmRNA and SmpB together mimic tRNA shape, replacing the anticodon stem-loop with SmpB. tmRNA is encoded by the ssrA gene; the 2 termini fold to resemble tRNA(Ala) and it encodes a 'tag peptide', a short internal open reading frame. During trans-translation Ala-aminoacylated tmRNA acts like a tRNA, entering the A-site of stalled ribosomes, displacing the stalled mRNA. The ribosome then switches to translate the ORF on the tmRNA; the nascent peptide is terminated with the 'tag peptide' encoded by the tmRNA and targeted for degradation. The ribosome is freed to recommence translation, which seems to be the essential function of trans-translation. The polypeptide is SsrA-binding protein (Clostridium tetani (strain Massachusetts / E88)).